The chain runs to 2038 residues: Fer-1-like protein 5 (2038 aa).

C2 domains follow at residues 1–100 (MLRV…MFVR), 145–265 (TQKK…TLLR), 307–424 (QNTR…QGMY), 1055–1186 (TPED…FTPL), 1225–1345 (IPCK…SLNY), 1467–1587 (PKPP…ARCG), and 1705–1853 (GPPG…KQCS). Residues Asp1502, Asp1508, Asp1557, Phe1558, Asp1559, Asp1565, Asp1824, Ser1827, and Asp1830 each contribute to the Ca(2+) site. The helical transmembrane segment at 1961–1981 (IICLVVTLVIGFILLNFVYSA) threads the bilayer.

This sequence belongs to the ferlin family. As to quaternary structure, interacts (via second C2 domain) with EHD1 and EHD2. Requires Ca(2+) as cofactor. As to expression, expressed in differentiating myoblasts and myotubes.

It localises to the cell membrane. It is found in the membrane. In terms of biological role, plays a role in myoblast fusion; probable mediator of endocytic recycling for membrane trafficking events during myotube formation. This chain is Fer-1-like protein 5 (Fer1l5), found in Mus musculus (Mouse).